The sequence spans 145 residues: MGSIRLMHAKLHRVCVTEANVNYVGSITIDPVMLERVGLLPLEEVDIINLSNGNRFSTYVLPGQAHSKEICPNGGAALLCQPGDRLIIFAYELCDRREVLQKGHQAKVLVTNESNETVDFYLQELIPKEDGVKFINNICSEAIPH.

Ser-26 serves as the catalytic Schiff-base intermediate with substrate; via pyruvic acid. Ser-26 carries the pyruvic acid (Ser) modification. Residue Thr-58 participates in substrate binding. Tyr-59 serves as the catalytic Proton donor. Position 74-76 (74-76 (GGA)) interacts with substrate.

Belongs to the PanD family. As to quaternary structure, heterooctamer of four alpha and four beta subunits. Pyruvate serves as cofactor. In terms of processing, is synthesized initially as an inactive proenzyme, which is activated by self-cleavage at a specific serine bond to produce a beta-subunit with a hydroxyl group at its C-terminus and an alpha-subunit with a pyruvoyl group at its N-terminus.

It is found in the cytoplasm. It catalyses the reaction L-aspartate + H(+) = beta-alanine + CO2. It functions in the pathway cofactor biosynthesis; (R)-pantothenate biosynthesis; beta-alanine from L-aspartate: step 1/1. Functionally, catalyzes the pyruvoyl-dependent decarboxylation of aspartate to produce beta-alanine. The polypeptide is Aspartate 1-decarboxylase (Synechocystis sp. (strain ATCC 27184 / PCC 6803 / Kazusa)).